Here is a 1475-residue protein sequence, read N- to C-terminus: Amylopullulanase (1475 aa).

An N-terminal signal peptide occupies residues 1-31; that stretch reads MFKRRALGFLLAFLLVFTAVFGSMPMEFAKA. Positions 245, 247, 285, 340, 398, 400, 403, 404, 449, and 451 each coordinate Ca(2+). Substrate is bound by residues H524 and R627. Catalysis depends on D629, which acts as the Nucleophile. The active-site Proton donor is E658. Residues 734-735, D794, and R798 contribute to the substrate site; that span reads HD. Fibronectin type-III domains lie at 928-1019 and 1164-1257; these read APQP…PAFP and TPTA…TPDI. A CBM20 domain is found at 1255 to 1362; that stretch reads PDIIPIKVTF…VNDTVQRWRD (108 aa).

This sequence belongs to the glycosyl hydrolase 13 family. It depends on Ca(2+) as a cofactor.

It carries out the reaction Endohydrolysis of (1-&gt;4)-alpha-D-glucosidic linkages in polysaccharides containing three or more (1-&gt;4)-alpha-linked D-glucose units.. The enzyme catalyses Hydrolysis of (1-&gt;6)-alpha-D-glucosidic linkages in pullulan, amylopectin and glycogen, and in the alpha- and beta-limit dextrins of amylopectin and glycogen.. This chain is Amylopullulanase (apu), found in Thermoanaerobacter thermohydrosulfuricus (Clostridium thermohydrosulfuricum).